Here is a 244-residue protein sequence, read N- to C-terminus: Ribosomal RNA small subunit methyltransferase NEP1 (244 aa).

The interval 1–33 (MSAASGGFQPRERRFSVQEQDWETTPPKKLRLG) is disordered. A phosphoserine mark is found at S5 and S16. S-adenosyl-L-methionine contacts are provided by residues T176, G201, G206, and 219–224 (ISNYPL).

This sequence belongs to the class IV-like SAM-binding methyltransferase superfamily. RNA methyltransferase NEP1 family. As to quaternary structure, homodimer. Part of the small subunit (SSU) processome, composed of more than 70 proteins and the RNA chaperone small nucleolar RNA (snoRNA) U3.

The protein localises to the nucleus. It is found in the nucleolus. It carries out the reaction pseudouridine(1248) in human 18S rRNA + S-adenosyl-L-methionine = N(1)-methylpseudouridine(1248) in human 18S rRNA + S-adenosyl-L-homocysteine + H(+). S-adenosyl-L-methionine-dependent pseudouridine N(1)-methyltransferase that methylates pseudouridine at position in 18S rRNA. Involved the biosynthesis of the hypermodified N1-methyl-N3-(3-amino-3-carboxypropyl) pseudouridine (m1acp3-Psi) conserved in eukaryotic 18S rRNA. Is not able to methylate uridine at this position. Also has an essential role in 40S ribosomal subunit biogenesis independent on its methyltransferase activity, facilitating the incorporation of ribosomal protein S19 during the formation of pre-ribosomes. Part of the small subunit (SSU) processome, first precursor of the small eukaryotic ribosomal subunit. During the assembly of the SSU processome in the nucleolus, many ribosome biogenesis factors, an RNA chaperone and ribosomal proteins associate with the nascent pre-rRNA and work in concert to generate RNA folding, modifications, rearrangements and cleavage as well as targeted degradation of pre-ribosomal RNA by the RNA exosome. This Mus musculus (Mouse) protein is Ribosomal RNA small subunit methyltransferase NEP1.